We begin with the raw amino-acid sequence, 94 residues long: Large ribosomal subunit protein bL27 (94 aa).

Residues methionine 1–phenylalanine 9 constitute a propeptide that is removed on maturation. The disordered stretch occupies residues histidine 11–alanine 33.

This sequence belongs to the bacterial ribosomal protein bL27 family. The N-terminus is cleaved by ribosomal processing cysteine protease Prp.

The sequence is that of Large ribosomal subunit protein bL27 from Streptococcus agalactiae serotype V (strain ATCC BAA-611 / 2603 V/R).